We begin with the raw amino-acid sequence, 437 residues long: (S)-6-hydroxynicotine oxidase (437 aa).

Residues serine 16, 35 to 37 (EAR), arginine 43, 57 to 60 (GGAG), valine 231, serine 405, and 413 to 415 (EYI) each bind FAD.

Belongs to the flavin monoamine oxidase family. As to quaternary structure, homodimer. The cofactor is FAD.

The enzyme catalyses (S)-6-hydroxynicotine + O2 + H2O = 6-hydroxypseudooxynicotine + H2O2. It carries out the reaction (S)-6-hydroxynicotine + O2 = 6-hydroxy-N-methylmyosmine + H2O2. It participates in alkaloid degradation; nicotine degradation; 6-hydroxypseudooxynicotine from nicotine (S-isomer route): step 2/2. With respect to regulation, partially inhibited by Co(2+) or Zn(2+) and significantly inhibited by Ag(+), Cu(2+) and Hg(2+). In terms of biological role, involved in the degradation of L-nicotine. Catalyzes the oxidation of (S)-6-hydroxynicotine (6-hydroxy-L-nicotine) to 6-hydroxypseudooxynicotine. Oxidation of the pyrrolidine ring of (S)-6-hydroxynicotine leads to the formation of the optically inactive 6-hydroxy-N-methylmyosmine, which hydrolyzes spontaneously to 6-hydroxypseudooxynicotine. Acts with absolute stereospecificity on the L-form of 6-hydroxynicotine. Also involved in the degradation of nornicotine, and catalyzes the oxidation of 6-hydroxynornicotine to 6-hydroxymyosmine, which hydrolyzes to 6-hydroxypseudooxynornicotine. In vitro, converts (S)-nicotine into N-methylmyosmine, which spontaneously hydrolyzes spontaneously into pseudooxynicotine, but catalytic efficiency is about 1900-fold higher with (S)-6-hydroxynicotine. This chain is (S)-6-hydroxynicotine oxidase, found in Shinella sp. (strain HZN7).